A 279-amino-acid chain; its full sequence is NH(3)-dependent NAD(+) synthetase (279 aa).

39–46 (GLSGGIDS) is an ATP binding site. D45 serves as a coordination point for Mg(2+). R122 lines the deamido-NAD(+) pocket. T142 is an ATP binding site. E147 serves as a coordination point for Mg(2+). K155 and D162 together coordinate deamido-NAD(+). ATP is bound by residues K171 and S193. 253–254 (HK) lines the deamido-NAD(+) pocket.

Belongs to the NAD synthetase family. In terms of assembly, homodimer.

It catalyses the reaction deamido-NAD(+) + NH4(+) + ATP = AMP + diphosphate + NAD(+) + H(+). It functions in the pathway cofactor biosynthesis; NAD(+) biosynthesis; NAD(+) from deamido-NAD(+) (ammonia route): step 1/1. Its function is as follows. Catalyzes the ATP-dependent amidation of deamido-NAD to form NAD. Uses ammonia as a nitrogen source. This chain is NH(3)-dependent NAD(+) synthetase, found in Sulfolobus acidocaldarius (strain ATCC 33909 / DSM 639 / JCM 8929 / NBRC 15157 / NCIMB 11770).